The sequence spans 1400 residues: Bromodomain-containing protein 4 (1400 aa).

The interval 1–58 is disordered; it reads MSTESGPGTRLRNLPVMGDGLETSQMSTTQAQAQPQPANAASTNPPPPETSNPNKPKR. Residues 23 to 43 are compositionally biased toward low complexity; that stretch reads TSQMSTTQAQAQPQPANAAST. Residues 58-164 enclose the Bromo 1 domain; that stretch reads RQTNQLQYLL…KLFLQKINEL (107 aa). Lys99 participates in a covalent cross-link: Glycyl lysine isopeptide (Lys-Gly) (interchain with G-Cter in SUMO2). 2 disordered regions span residues 176–353 and 461–616; these read AKGR…KISE and EPEE…YEEK. Low complexity predominate over residues 197–212; it reads PNTTQASTSPQTQTPQ. The span at 244–267 shows a compositional bias: pro residues; sequence PPQPLQTPSPVPPQPPPPPAPVPQ. The segment covering 321 to 337 has biased composition (basic and acidic residues); that stretch reads PRRESSRPVKPPKKDVP. The region spanning 349 to 458 is the Bromo 2 domain; sequence SKISEQLKCC…DVFEMRFAKM (110 aa). Ser471 is modified (phosphoserine). Positions 479-498 are enriched in low complexity; the sequence is KVVAPPSSSDSSSDSSSDSD. Ser485, Ser489, and Ser493 each carry phosphoserine; by CK2. Residues 485–504 are NPS region; sequence SSSDSSSDSSSDSDSSTDDS. Position 495 is a phosphoserine (Ser495). Residues Ser499, Ser500, and Ser504 each carry the phosphoserine; by CK2 modification. The tract at residues 525–580 is BID region; sequence QLAALSQPQQNKPKKKEKDKKEKKKEKHKKKEEVEENKKSKTKELPPKKTKKNNSS. Basic residues predominate over residues 536 to 554; sequence KPKKKEKDKKEKKKEKHKK. Basic and acidic residues predominate over residues 555–571; sequence KEEVEENKKSKTKELPP. Residue Lys586 forms a Glycyl lysine isopeptide (Lys-Gly) (interchain with G-Cter in SUMO2) linkage. Positions 601-683 constitute an NET domain; sequence ESEEEDKCKP…SCLRKKRKPQ (83 aa). At Ser602 the chain carries Phosphoserine. The span at 606 to 616 shows a compositional bias: basic and acidic residues; the sequence is DKCKPMSYEEK. Residues Lys646 and Lys695 each participate in a glycyl lysine isopeptide (Lys-Gly) (interchain with G-Cter in SUMO2) cross-link. The segment at 675-1125 is disordered; the sequence is CLRKKRKPQA…GCPPASPAAV (451 aa). Residues 700-713 are compositionally biased toward low complexity; sequence SSSESESTSESSSS. The segment covering 725–745 has biased composition (basic residues); the sequence is KSKKKGHTGRDQKKHHHHHHP. Pro residues-rich tracts occupy residues 748 to 787, 835 to 848, 883 to 892, and 900 to 909; these read QPAPAPVPQQPPPPPQQPPPPPPPQQQQQQPPPPPPPPSM, PELPPHLPQPPEHS, PPKPTRPPAV, and PLLPQPPMAQ. Positions 928-938 are enriched in low complexity; the sequence is MQMQLYLQQLQ. 3 stretches are compositionally biased toward pro residues: residues 955–966, 975–1000, and 1013–1037; these read QPPPPLPPPPHP, PQPPPPPPPQPQPPPQQQHQPPPRPV, and QPPPPPGQQPTHPPPGQQPPPPQPA. Residues 1050–1400 form a C-terminal (CTD) region region; it reads RHHKSDPYSA…LLSIFEENLF (351 aa). Residue Lys1053 forms a Glycyl lysine isopeptide (Lys-Gly) (interchain with G-Cter in SUMO2) linkage. Residues 1075 to 1084 are compositionally biased toward polar residues; it reads QMPQFQSLTH. Positions 1085 to 1095 are enriched in low complexity; sequence QSPPQQNVQPK. Lys1147 is subject to N6-acetyllysine; alternate. Lys1147 participates in a covalent cross-link: Glycyl lysine isopeptide (Lys-Gly) (interchain with G-Cter in SUMO1); alternate. Lys1147 participates in a covalent cross-link: Glycyl lysine isopeptide (Lys-Gly) (interchain with G-Cter in SUMO2); alternate. A phosphoserine mark is found at Ser1153 and Ser1162. The tract at residues 1155 to 1377 is disordered; that stretch reads IIRSEPFSTS…KREQERRRRE (223 aa). The span at 1211 to 1232 shows a compositional bias: basic and acidic residues; that stretch reads PDKDKQKQEPKTPVAPKKDLKI. A Glycyl lysine isopeptide (Lys-Gly) (interchain with G-Cter in SUMO2) cross-link involves residue Lys1233. Residues Ser1237 and Ser1240 each carry the phosphoserine modification. Residues 1247–1258 show a composition bias toward low complexity; sequence TTPSSTAKSSSD. The span at 1259-1320 shows a compositional bias: basic and acidic residues; the sequence is SFEHFRRAAR…AHEEARRRQE (62 aa). Positions 1321 to 1357 are enriched in low complexity; that stretch reads QQQQQQQQRQEQQQQQQQAAAVAAASAPQAQSSQPQS. The segment covering 1361-1377 has biased composition (basic and acidic residues); sequence QQRELARKREQERRRRE.

It belongs to the BET family. As to quaternary structure, binds acetylated histone H4. Interacts with p53/TP53; the interaction is direct. Interacts (via CTD region) with CDK9 and CCNT1, acting as an associated component of P-TEFb complex. Interacts with RELA (when acetylated at 'Lys-310'). Interacts (via NET domain) with NSD3, CHD4, BICRA and ATAD5. The interaction with BICRA bridges BRD4 to the GBAF complex. Interacts (via NET domain) with JMJD6 (via JmjC and N-terminal domains); the interaction is stronger in presence of ssRNA and recruits JMJD6 on distal enhancers. Interacts with NSD3. Interacts with NIPBL. Post-translationally, phosphorylation by CK2 disrupt the intramolecular binding between the bromo domain 2 and the NPS region and promotes binding between the NPS and the BID regions, leading to activate the protein and promote binding to acetylated histones. In absence of phosphorylation, BRD4 does not localize to p53/TP53 target gene promoters, phosphorylation promoting recruitment to p53/TP53 target promoters.

The protein localises to the nucleus. It is found in the chromosome. In terms of biological role, chromatin reader protein that recognizes and binds acetylated histones and plays a key role in transmission of epigenetic memory across cell divisions and transcription regulation. Remains associated with acetylated chromatin throughout the entire cell cycle and provides epigenetic memory for postmitotic G1 gene transcription by preserving acetylated chromatin status and maintaining high-order chromatin structure. During interphase, plays a key role in regulating the transcription of signal-inducible genes by associating with the P-TEFb complex and recruiting it to promoters. Also recruits P-TEFb complex to distal enhancers, so called anti-pause enhancers in collaboration with JMJD6. BRD4 and JMJD6 are required to form the transcriptionally active P-TEFb complex by displacing negative regulators such as HEXIM1 and 7SKsnRNA complex from P-TEFb, thereby transforming it into an active form that can then phosphorylate the C-terminal domain (CTD) of RNA polymerase II. Regulates differentiation of naive CD4(+) T-cells into T-helper Th17 by promoting recruitment of P-TEFb to promoters. Promotes phosphorylation of 'Ser-2' of the C-terminal domain (CTD) of RNA polymerase II. According to a report, directly acts as an atypical protein kinase and mediates phosphorylation of 'Ser-2' of the C-terminal domain (CTD) of RNA polymerase II; these data however need additional evidences in vivo. In addition to acetylated histones, also recognizes and binds acetylated RELA, leading to further recruitment of the P-TEFb complex and subsequent activation of NF-kappa-B. Also acts as a regulator of p53/TP53-mediated transcription: following phosphorylation by CK2, recruited to p53/TP53 specific target promoters. This chain is Bromodomain-containing protein 4 (Brd4), found in Mus musculus (Mouse).